The primary structure comprises 651 residues: Peptide-N(4)-(N-acetyl-beta-glucosaminyl)asparagine amidase (651 aa).

The residue at position 2 (Ala2) is an N-acetylalanine. The region spanning 30–91 (EASKLLLTYA…EGETHLIFPK (62 aa)) is the PUB domain. Cys247, Cys250, Cys280, and Cys283 together coordinate Zn(2+). The active-site Nucleophile is the Cys306. Catalysis depends on residues His333 and Asp350. In terms of domain architecture, PAW spans 451 to 651 (ELGGRVSGSL…LEIIITFNDL (201 aa)).

It belongs to the transglutaminase-like superfamily. PNGase family. In terms of assembly, component of a complex required to couple retrotranslocation, ubiquitination and deglycosylation composed of NGLY1, SAKS1, AMFR, VCP and RAD23B. Interacts with the proteasome components RAD23B and PSMC1. Interacts with directly with VCP. Interacts with DERL1, bringing it close to the endoplasmic reticulum membrane. Interacts with SAKS1. Zn(2+) is required as a cofactor. Ubiquitously expressed with highest level in testis.

It localises to the cytoplasm. It carries out the reaction Hydrolysis of an N(4)-(acetyl-beta-D-glucosaminyl)asparagine residue in which the glucosamine residue may be further glycosylated, to yield a (substituted) N-acetyl-beta-D-glucosaminylamine and a peptide containing an aspartate residue.. Inhibited by Z-VAD-fmk, a well-known caspase inhibitor, which inhibits enzyme activity through covalent binding of the carbohydrate to the single Cys-306 residue. Functionally, specifically deglycosylates the denatured form of N-linked glycoproteins in the cytoplasm and assists their proteasome-mediated degradation. Cleaves the beta-aspartyl-glucosamine (GlcNAc) of the glycan and the amide side chain of Asn, converting Asn to Asp. Prefers proteins containing high-mannose over those bearing complex type oligosaccharides. Can recognize misfolded proteins in the endoplasmic reticulum that are exported to the cytosol to be destroyed and deglycosylate them, while it has no activity toward native proteins. Deglycosylation is a prerequisite for subsequent proteasome-mediated degradation of some, but not all, misfolded glycoproteins. The sequence is that of Peptide-N(4)-(N-acetyl-beta-glucosaminyl)asparagine amidase (Ngly1) from Mus musculus (Mouse).